The following is a 553-amino-acid chain: Undecaprenyl phosphate-alpha-4-amino-4-deoxy-L-arabinose arabinosyl transferase (553 aa).

The next 11 helical transmembrane spans lie at 6 to 26 (ACKVGAFLMALFFVITYLLPL), 89 to 109 (FGSVFCIFISAILLYRLAMMM), 115 to 135 (IAFATSLIYISMFLVFAIGTY), 180 to 200 (FMTKGFLALAVPVIVMLPIVI), 208 to 228 (IVCFGPLAIISAIAISLPWVI), 258 to 278 (IAPFWYYIPILILGVIPWLGL), 293 to 313 (NPEMFFLLCWFVVPLLFFSIA), 317 to 337 (LPTYILPCMAPLAMMMAKFGV), 352 to 372 (GMVNVFLGLLAVIVLFAMEVV), 386 to 406 (WVLAIVAFGIWGIIGYLCFAL), and 410 to 430 (YWLLAAFCSIVVSLVIGHALP).

This sequence belongs to the glycosyltransferase 83 family.

It is found in the cell inner membrane. The enzyme catalyses 4-amino-4-deoxy-alpha-L-arabinopyranosyl di-trans,octa-cis-undecaprenyl phosphate + lipid IVA = lipid IIA + di-trans,octa-cis-undecaprenyl phosphate.. The protein operates within lipopolysaccharide metabolism; 4-amino-4-deoxy-beta-L-arabinose-lipid A biosynthesis. In terms of biological role, catalyzes the transfer of the L-Ara4N moiety of the glycolipid undecaprenyl phosphate-alpha-L-Ara4N to lipid A. The modified arabinose is attached to lipid A and is required for resistance to polymyxin and cationic antimicrobial peptides. The chain is Undecaprenyl phosphate-alpha-4-amino-4-deoxy-L-arabinose arabinosyl transferase (arnT) from Photorhabdus laumondii subsp. laumondii (strain DSM 15139 / CIP 105565 / TT01) (Photorhabdus luminescens subsp. laumondii).